A 171-amino-acid chain; its full sequence is Glutamyl-tRNA(Gln) amidotransferase subunit F, mitochondrial (171 aa).

Belongs to the GatF family. In terms of assembly, subunit of the heterotrimeric GatFAB amidotransferase (AdT) complex, composed of A, B and F subunits.

The protein resides in the mitochondrion inner membrane. It carries out the reaction L-glutamyl-tRNA(Gln) + L-glutamine + ATP + H2O = L-glutaminyl-tRNA(Gln) + L-glutamate + ADP + phosphate + H(+). In terms of biological role, allows the formation of correctly charged Gln-tRNA(Gln) through the transamidation of misacylated Glu-tRNA(Gln) in the mitochondria. The reaction takes place in the presence of glutamine and ATP through an activated gamma-phospho-Glu-tRNA(Gln). Required for proper protein synthesis within the mitochondrion. This is Glutamyl-tRNA(Gln) amidotransferase subunit F, mitochondrial from Zygosaccharomyces rouxii (strain ATCC 2623 / CBS 732 / NBRC 1130 / NCYC 568 / NRRL Y-229).